A 383-amino-acid polypeptide reads, in one-letter code: L-lactate dehydrogenase (383 aa).

One can recognise an FMN hydroxy acid dehydrogenase domain in the interval Met1–Ala380. Tyr24 contributes to the substrate binding site. Residues Ser106 and Gln127 each coordinate FMN. Residue Tyr129 coordinates substrate. Position 155 (Thr155) interacts with FMN. Residue Arg164 coordinates substrate. Lys251 lines the FMN pocket. The active-site Proton acceptor is His275. Arg278 is a binding site for substrate. Asp306–Arg330 contributes to the FMN binding site.

It belongs to the FMN-dependent alpha-hydroxy acid dehydrogenase family. It depends on FMN as a cofactor.

The protein resides in the cell inner membrane. It catalyses the reaction (S)-lactate + A = pyruvate + AH2. Its function is as follows. Catalyzes the conversion of L-lactate to pyruvate. Is coupled to the respiratory chain. The sequence is that of L-lactate dehydrogenase from Bartonella tribocorum (strain CIP 105476 / IBS 506).